The chain runs to 179 residues: Negative modulator of initiation of replication (179 aa).

The tract at residues 86 to 87 is interaction with DNA; that stretch reads AV.

Belongs to the SeqA family. As to quaternary structure, homodimer. Polymerizes to form helical filaments.

It localises to the cytoplasm. Functionally, negative regulator of replication initiation, which contributes to regulation of DNA replication and ensures that replication initiation occurs exactly once per chromosome per cell cycle. Binds to pairs of hemimethylated GATC sequences in the oriC region, thus preventing assembly of replication proteins and re-initiation at newly replicated origins. Repression is relieved when the region becomes fully methylated. This chain is Negative modulator of initiation of replication, found in Shewanella woodyi (strain ATCC 51908 / MS32).